A 127-amino-acid chain; its full sequence is UPF0325 protein VP2321 (127 aa).

This sequence belongs to the UPF0325 family.

The protein is UPF0325 protein VP2321 of Vibrio parahaemolyticus serotype O3:K6 (strain RIMD 2210633).